A 420-amino-acid chain; its full sequence is Glucose-1-phosphate adenylyltransferase (420 aa).

Residues tyrosine 107, glycine 173, glutamate 188–lysine 189, and serine 206 each bind alpha-D-glucose 1-phosphate.

The protein belongs to the bacterial/plant glucose-1-phosphate adenylyltransferase family. As to quaternary structure, homotetramer.

It catalyses the reaction alpha-D-glucose 1-phosphate + ATP + H(+) = ADP-alpha-D-glucose + diphosphate. Its pathway is glycan biosynthesis; glycogen biosynthesis. Functionally, involved in the biosynthesis of ADP-glucose, a building block required for the elongation reactions to produce glycogen. Catalyzes the reaction between ATP and alpha-D-glucose 1-phosphate (G1P) to produce pyrophosphate and ADP-Glc. The sequence is that of Glucose-1-phosphate adenylyltransferase from Shewanella sp. (strain ANA-3).